The sequence spans 576 residues: Arginine--tRNA ligase (576 aa).

A 'HIGH' region motif is present at residues 132 to 142 (ANPTGPMHIGH).

It belongs to the class-I aminoacyl-tRNA synthetase family. Monomer.

The protein localises to the cytoplasm. The catalysed reaction is tRNA(Arg) + L-arginine + ATP = L-arginyl-tRNA(Arg) + AMP + diphosphate. The protein is Arginine--tRNA ligase of Ehrlichia ruminantium (strain Welgevonden).